The primary structure comprises 381 residues: MSRLQFQLQATDGHARRGRLTFPRGTVETPAFMPVGTYGSVKGILPEQIRALGAEIILGNTFHLYLRPGLEVIGDHGGLHGFARWDGPILTDSGGFQVFSLAHRRKITEQGVTFSSPTDGARVFLGPEESMKIQKVLDSDIVMIFDECTPYPATEDVARRSMELSLRWAQRSRDAHDGLGNDAALFGIVQGGVHPDLRSRSLDGLQAIGFDGYAIGGLAVGEPEHERNAMLEHLHPRLPAERPRYLMGVGRPEDLVEGVARGVDMFDCVMPTRNARNGHYFTSFGTVRIRNAKYERDLDTIEPGCGCHACSSGYTRAYLRHLDRCNEMLAPMLGTLHNLWYYEKLMADMRAAIASGTFVEFRRSFYAARGATTPPLPGETS.

Asp92 acts as the Proton acceptor in catalysis. Residues 92–96 (DSGGF), Asp146, Gln190, and Gly217 contribute to the substrate site. Residues 248 to 254 (GVGRPED) form an RNA binding region. The Nucleophile role is filled by Asp267. The tract at residues 272 to 276 (TRNAR) is RNA binding; important for wobble base 34 recognition. The Zn(2+) site is built by Cys305, Cys307, Cys310, and His337.

This sequence belongs to the queuine tRNA-ribosyltransferase family. As to quaternary structure, homodimer. Within each dimer, one monomer is responsible for RNA recognition and catalysis, while the other monomer binds to the replacement base PreQ1. It depends on Zn(2+) as a cofactor.

The enzyme catalyses 7-aminomethyl-7-carbaguanine + guanosine(34) in tRNA = 7-aminomethyl-7-carbaguanosine(34) in tRNA + guanine. The protein operates within tRNA modification; tRNA-queuosine biosynthesis. Its function is as follows. Catalyzes the base-exchange of a guanine (G) residue with the queuine precursor 7-aminomethyl-7-deazaguanine (PreQ1) at position 34 (anticodon wobble position) in tRNAs with GU(N) anticodons (tRNA-Asp, -Asn, -His and -Tyr). Catalysis occurs through a double-displacement mechanism. The nucleophile active site attacks the C1' of nucleotide 34 to detach the guanine base from the RNA, forming a covalent enzyme-RNA intermediate. The proton acceptor active site deprotonates the incoming PreQ1, allowing a nucleophilic attack on the C1' of the ribose to form the product. After dissociation, two additional enzymatic reactions on the tRNA convert PreQ1 to queuine (Q), resulting in the hypermodified nucleoside queuosine (7-(((4,5-cis-dihydroxy-2-cyclopenten-1-yl)amino)methyl)-7-deazaguanosine). The sequence is that of Queuine tRNA-ribosyltransferase from Xanthomonas axonopodis pv. citri (strain 306).